A 214-amino-acid polypeptide reads, in one-letter code: Orotate phosphoribosyltransferase (214 aa).

Residue lysine 26 coordinates 5-phospho-alpha-D-ribose 1-diphosphate. 34–35 (FF) serves as a coordination point for orotate. 5-phospho-alpha-D-ribose 1-diphosphate-binding positions include 72–73 (YK), arginine 99, lysine 100, lysine 103, histidine 105, and 124–132 (DDVITAGTA). Threonine 128 and arginine 157 together coordinate orotate.

This sequence belongs to the purine/pyrimidine phosphoribosyltransferase family. PyrE subfamily. In terms of assembly, homodimer. Requires Mg(2+) as cofactor.

It carries out the reaction orotidine 5'-phosphate + diphosphate = orotate + 5-phospho-alpha-D-ribose 1-diphosphate. Its pathway is pyrimidine metabolism; UMP biosynthesis via de novo pathway; UMP from orotate: step 1/2. In terms of biological role, catalyzes the transfer of a ribosyl phosphate group from 5-phosphoribose 1-diphosphate to orotate, leading to the formation of orotidine monophosphate (OMP). This chain is Orotate phosphoribosyltransferase, found in Pseudomonas fluorescens (strain ATCC BAA-477 / NRRL B-23932 / Pf-5).